The following is a 399-amino-acid chain: 3-sulfinopropanoyl-CoA desulfinase (399 aa).

Residues 121 to 124, Ser-130, and 153 to 156 contribute to the FAD site; these read ICIS and YWIT. Residue 244–245 participates in substrate binding; sequence YN. FAD contacts are provided by residues Arg-273, Gln-340, Ser-344, 367–371, and Gln-388; that span reads GGTAQ.

The protein belongs to the acyl-CoA dehydrogenase family. As to quaternary structure, homotrimer or homotetramer. FAD serves as cofactor.

It catalyses the reaction 3-sulfinopropanoyl-CoA + H2O = propanoyl-CoA + sulfite + H(+). Functionally, catalyzes the conversion 3-sulfinopropanoyl-CoA (3SP-CoA) to propanoyl-CoA by abstraction of sulfite. Does not show dehydrogenase activity. The sequence is that of 3-sulfinopropanoyl-CoA desulfinase from Variovorax paradoxus.